Here is a 320-residue protein sequence, read N- to C-terminus: Cytochrome f (320 aa).

The first 35 residues, 1–35, serve as a signal peptide directing secretion; it reads MQNRNTFSWVKEQMTRSIFVSMMIYIITRASISNA. Residues Tyr-36, Cys-56, Cys-59, and His-60 each coordinate heme. A helical transmembrane segment spans residues 286–306; it reads IQGLFLFLASVILAQIFLVLK.

It belongs to the cytochrome f family. The 4 large subunits of the cytochrome b6-f complex are cytochrome b6, subunit IV (17 kDa polypeptide, petD), cytochrome f and the Rieske protein, while the 4 small subunits are PetG, PetL, PetM and PetN. The complex functions as a dimer. Requires heme as cofactor.

The protein localises to the plastid. The protein resides in the chloroplast thylakoid membrane. In terms of biological role, component of the cytochrome b6-f complex, which mediates electron transfer between photosystem II (PSII) and photosystem I (PSI), cyclic electron flow around PSI, and state transitions. This chain is Cytochrome f, found in Amborella trichopoda.